Reading from the N-terminus, the 394-residue chain is Elongation factor Tu (394 aa).

The tr-type G domain occupies 10–204 (LPHVNIGTIG…AVDEYIPTPT (195 aa)). Residues 19-26 (GHVDHGKT) are G1. Residue 19 to 26 (GHVDHGKT) coordinates GTP. Residue Thr-26 participates in Mg(2+) binding. Residues 60–64 (GITIN) are G2. The segment at 81–84 (DCPG) is G3. Residues 81–85 (DCPGH) and 136–139 (NKCD) contribute to the GTP site. Residues 136–139 (NKCD) form a G4 region. Residues 174 to 176 (SAL) are G5.

The protein belongs to the TRAFAC class translation factor GTPase superfamily. Classic translation factor GTPase family. EF-Tu/EF-1A subfamily. Monomer.

The protein resides in the cytoplasm. It carries out the reaction GTP + H2O = GDP + phosphate + H(+). Functionally, GTP hydrolase that promotes the GTP-dependent binding of aminoacyl-tRNA to the A-site of ribosomes during protein biosynthesis. This chain is Elongation factor Tu, found in Mesoplasma florum (strain ATCC 33453 / NBRC 100688 / NCTC 11704 / L1) (Acholeplasma florum).